Consider the following 45-residue polypeptide: uncharacterized protein (45 aa).

The helical transmembrane segment at 10 to 27 (LLYFVLFVDIYGIFTNNI) threads the bilayer.

It is found in the membrane. This is an uncharacterized protein from Dictyostelium discoideum (Social amoeba).